The chain runs to 277 residues: Undecaprenyl-diphosphatase 2 (277 aa).

A run of 6 helical transmembrane segments spans residues 43–63 (RAMA…VWEF), 87–107 (LLIA…TIHE), 109–129 (LFNP…MLWA), 183–203 (AATE…AVYS), 214–234 (SDLP…MIAV), and 254–274 (IAFG…WTAA).

This sequence belongs to the UppP family.

It is found in the cell inner membrane. The enzyme catalyses di-trans,octa-cis-undecaprenyl diphosphate + H2O = di-trans,octa-cis-undecaprenyl phosphate + phosphate + H(+). Catalyzes the dephosphorylation of undecaprenyl diphosphate (UPP). Confers resistance to bacitracin. The protein is Undecaprenyl-diphosphatase 2 of Pseudomonas fluorescens (strain Pf0-1).